A 431-amino-acid polypeptide reads, in one-letter code: uncharacterized protein (431 aa).

Disordered regions lie at residues 1 to 37 and 102 to 132; these read MFWR…KLTP and PPPL…RRVA. The span at 22–32 shows a compositional bias: basic and acidic residues; the sequence is GDFRRSSDPRL. A compositionally biased stretch (low complexity) spans 106 to 121; sequence LSAGASRESAPRQPGP. A compositionally biased stretch (basic and acidic residues) spans 122-132; it reads GERERPRRRVA.

The protein localises to the cytoplasm. This is an uncharacterized protein from Homo sapiens (Human).